The chain runs to 205 residues: uncharacterized protein (205 aa).

A run of 4 helical transmembrane segments spans residues 18-38 (ATVN…GTIG), 69-89 (LGIF…CFYA), 106-126 (VVWI…YYIM), and 127-147 (LLHP…LFLI).

The protein resides in the mitochondrion membrane. This is an uncharacterized protein from Arabidopsis thaliana (Mouse-ear cress).